A 442-amino-acid chain; its full sequence is L-seryl-tRNA(Sec) selenium transferase (442 aa).

Position 284 is an N6-(pyridoxal phosphate)lysine (K284).

Belongs to the SelA family. Requires pyridoxal 5'-phosphate as cofactor.

Its subcellular location is the cytoplasm. The catalysed reaction is L-seryl-tRNA(Sec) + selenophosphate + H(+) = L-selenocysteinyl-tRNA(Sec) + phosphate. Its pathway is aminoacyl-tRNA biosynthesis; selenocysteinyl-tRNA(Sec) biosynthesis; selenocysteinyl-tRNA(Sec) from L-seryl-tRNA(Sec) (bacterial route): step 1/1. Its function is as follows. Converts seryl-tRNA(Sec) to selenocysteinyl-tRNA(Sec) required for selenoprotein biosynthesis. This Campylobacter fetus subsp. fetus (strain 82-40) protein is L-seryl-tRNA(Sec) selenium transferase.